We begin with the raw amino-acid sequence, 911 residues long: Anoctamin-6 (911 aa).

Topologically, residues 1–301 (MQMMTRKVLL…YGEKIGIYFA (301 aa)) are cytoplasmic. A helical membrane pass occupies residues 302–322 (WLGYYTQMLLLAAVVGVACFL). Topologically, residues 323–376 (YGYLDQDNCTWSKEVCDPDIGGQILMCPQCDRLCPFWRLNITCESSKKLCIFDS) are extracellular. Asn-330 carries N-linked (GlcNAc...) asparagine glycosylation. Intrachain disulfides connect Cys-331/Cys-372, Cys-338/Cys-365, Cys-349/Cys-807, Cys-352/Cys-356, and Cys-596/Cys-601. An N-linked (GlcNAc...) asparagine glycan is attached at Asn-362. The chain crosses the membrane as a helical span at residues 377–397 (FGTLIFAVFMGVWVTLFLEFW). Residues 398–456 (KRRQAELEYEWDTVELQQEEQARPEYEAQCNHVVINEITQEEERIPFTTCGKCIRVTLC) lie on the Cytoplasmic side of the membrane. Residues 457-477 (ASAVFFWILLIIASVIGIIVY) traverse the membrane as a helical segment. Residues 478-510 (RLSVFIVFSTTLPKNPNGTDPIQKYLTPQMATS) lie on the Extracellular side of the membrane. Asn-494 is a glycosylation site (N-linked (GlcNAc...) asparagine). Residues 511–531 (ITASIISFIIIMILNTIYEKV) form a helical membrane-spanning segment. Topologically, residues 532 to 552 (AIMITNFELPRTQTDYENSLT) are cytoplasmic. Residues 553 to 573 (MKMFLFQFVNYYSSCFYIAFF) form a helical membrane-spanning segment. Residues 574-602 (KGKFVGYPGDPVYLLGKYRSEECDPGGCL) lie on the Extracellular side of the membrane. The chain crosses the membrane as a helical span at residues 603 to 622 (LELTTQLTIIMGGKAIWNNI). Topologically, residues 623–664 (QEVLLPWVMNLIGRYKRVSGSEKITPRWEQDYHLQPMGKLGL) are cytoplasmic. Residues Glu-624, Glu-667, and Glu-670 each coordinate Ca(2+). Transmembrane regions (helical) follow at residues 665–685 (FYEY…VASF) and 686–706 (PLAP…DAWK). Topologically, residues 707 to 723 (LTTQFRRMVPEKAQDIG) are cytoplasmic. Residues 724–744 (AWQPIMQGIAILAVVTNAMII) form a helical membrane-spanning segment. Residues 745–837 (AFTSDMIPRL…YWHVIAAKLA (93 aa)) lie on the Extracellular side of the membrane. 3 N-linked (GlcNAc...) asparagine glycosylation sites follow: Asn-778, Asn-785, and Asn-803. The helical transmembrane segment at 838–858 (FIIVMEHIIYSVKFFISYAIP) threads the bilayer. At 859–911 (DVSKITKSKIKREKYLTQKLLHESHLKDLTKNMGIIAERIGGTVDNSVRPKLE) the chain is on the cytoplasmic side.

The protein belongs to the anoctamin family. Homodimer. As to expression, predominant expression seen in epithelial tissues. Also found in skeletal system where it is primarily expressed in osteoblasts.

It is found in the cell membrane. The enzyme catalyses a 1,2-diacyl-sn-glycero-3-phospho-L-serine(in) = a 1,2-diacyl-sn-glycero-3-phospho-L-serine(out). It catalyses the reaction a beta-D-galactosyl-(1&lt;-&gt;1')-N-acylsphing-4-enine(out) = a beta-D-galactosyl-(1&lt;-&gt;1')-N-acylsphing-4-enine(in). The catalysed reaction is a 1,2-diacyl-sn-glycero-3-phosphocholine(in) = a 1,2-diacyl-sn-glycero-3-phosphocholine(out). Exhibits synergistic gating by Ca(2+) and voltage. Inhibited by some non-specific cation channel blockers such as: ruthenium red, 2-aminoethyl diphenylborinate (2APB), gadolinium and cadmium ions. Functionally, small-conductance calcium-activated nonselective cation (SCAN) channel which acts as a regulator of phospholipid scrambling in platelets, osteoblasts and fetal thymocytes. Phospholipid scrambling results in surface exposure of phosphatidylserine which in platelets is essential to trigger the clotting system whereas in osteoblasts is essential for the deposition of hydroxyapatite during bone mineralization. Has calcium-dependent phospholipid scramblase activity; scrambles phosphatidylserine, phosphatidylcholine and galactosylceramide. Can generate outwardly rectifying chloride channel currents in airway epithelial cells and Jurkat T lymphocytes. In Mus musculus (Mouse), this protein is Anoctamin-6 (Ano6).